The chain runs to 638 residues: Phosphomethylpyrimidine synthase (638 aa).

Residues Asn-243, Met-272, Tyr-301, His-337, 357–359, 398–401, and Glu-437 each bind substrate; these read SRG and DGLR. His-441 lines the Zn(2+) pocket. Tyr-464 lines the substrate pocket. Zn(2+) is bound at residue His-505. Positions 585, 588, and 593 each coordinate [4Fe-4S] cluster.

It belongs to the ThiC family. As to quaternary structure, homodimer. [4Fe-4S] cluster serves as cofactor.

The enzyme catalyses 5-amino-1-(5-phospho-beta-D-ribosyl)imidazole + S-adenosyl-L-methionine = 4-amino-2-methyl-5-(phosphooxymethyl)pyrimidine + CO + 5'-deoxyadenosine + formate + L-methionine + 3 H(+). Its pathway is cofactor biosynthesis; thiamine diphosphate biosynthesis. Catalyzes the synthesis of the hydroxymethylpyrimidine phosphate (HMP-P) moiety of thiamine from aminoimidazole ribotide (AIR) in a radical S-adenosyl-L-methionine (SAM)-dependent reaction. The polypeptide is Phosphomethylpyrimidine synthase (Dechloromonas aromatica (strain RCB)).